The sequence spans 510 residues: NAD(P)H-quinone oxidoreductase subunit 2, chloroplastic (510 aa).

11 helical membrane-spanning segments follow: residues 24–44, 59–79, 99–119, 124–144, 149–169, 183–203, 295–315, 323–343, 347–367, 395–415, and 418–438; these read LLLFHGSFIFPECILIFGLIL, WFYFISSTSLVMSITALLFRW, IFQFLILLCSTLCIPLSVEYI, MAITEFLLFVLTATLGGMFLC, LITIFVAPECFSLCSYLLSGY, YLLMGGASSSILVHGFSWLYG, WHLLLEILAILSMILGNLIAI, MLAYSSIGQIGYVIIGIIVGD, GYASMITYMLFYISMNLGTFA, ALSSALCLLSLGGLPPLAGFF, and LYLFWCGWQAGLYFLVSIGLL.

This sequence belongs to the complex I subunit 2 family. In terms of assembly, NDH is composed of at least 16 different subunits, 5 of which are encoded in the nucleus.

Its subcellular location is the plastid. The protein resides in the chloroplast thylakoid membrane. The enzyme catalyses a plastoquinone + NADH + (n+1) H(+)(in) = a plastoquinol + NAD(+) + n H(+)(out). It catalyses the reaction a plastoquinone + NADPH + (n+1) H(+)(in) = a plastoquinol + NADP(+) + n H(+)(out). Functionally, NDH shuttles electrons from NAD(P)H:plastoquinone, via FMN and iron-sulfur (Fe-S) centers, to quinones in the photosynthetic chain and possibly in a chloroplast respiratory chain. The immediate electron acceptor for the enzyme in this species is believed to be plastoquinone. Couples the redox reaction to proton translocation, and thus conserves the redox energy in a proton gradient. The polypeptide is NAD(P)H-quinone oxidoreductase subunit 2, chloroplastic (Asparagus officinalis (Garden asparagus)).